The sequence spans 418 residues: 26S proteasome regulatory subunit 6B (418 aa).

Methionine 1 is subject to N-acetylmethionine. At serine 21 the chain carries Phosphoserine. Threonine 25 bears the Phosphothreonine mark. At serine 28 the chain carries Phosphoserine. Residue 206 to 213 coordinates ATP; the sequence is GPPGCGKT. 2 positions are modified to N6-acetyllysine: lysine 397 and lysine 401.

Belongs to the AAA ATPase family. In terms of assembly, component of the 19S proteasome regulatory particle complex. The 26S proteasome consists of a 20S core particle (CP) and two 19S regulatory subunits (RP). The regulatory particle is made of a lid composed of 9 subunits, a base containing 6 ATPases including PSMC4 and few additional components. Interacts with NR1I3. Interacts with PAAF1. Interacts with TRIM5. Interacts with ZFAND1.

It is found in the cytoplasm. The protein localises to the nucleus. Component of the 26S proteasome, a multiprotein complex involved in the ATP-dependent degradation of ubiquitinated proteins. This complex plays a key role in the maintenance of protein homeostasis by removing misfolded or damaged proteins, which could impair cellular functions, and by removing proteins whose functions are no longer required. Therefore, the proteasome participates in numerous cellular processes, including cell cycle progression, apoptosis, or DNA damage repair. PSMC4 belongs to the heterohexameric ring of AAA (ATPases associated with diverse cellular activities) proteins that unfolds ubiquitinated target proteins that are concurrently translocated into a proteolytic chamber and degraded into peptides. This Bos taurus (Bovine) protein is 26S proteasome regulatory subunit 6B (PSMC4).